Consider the following 336-residue polypeptide: tRNA N6-adenosine threonylcarbamoyltransferase (336 aa).

Fe cation contacts are provided by H114 and H118. Residues 136 to 140 (LVSGG), D169, G182, D186, and N275 each bind substrate. Residue D301 participates in Fe cation binding.

The protein belongs to the KAE1 / TsaD family. The cofactor is Fe(2+).

The protein localises to the cytoplasm. The catalysed reaction is L-threonylcarbamoyladenylate + adenosine(37) in tRNA = N(6)-L-threonylcarbamoyladenosine(37) in tRNA + AMP + H(+). Functionally, required for the formation of a threonylcarbamoyl group on adenosine at position 37 (t(6)A37) in tRNAs that read codons beginning with adenine. Is involved in the transfer of the threonylcarbamoyl moiety of threonylcarbamoyl-AMP (TC-AMP) to the N6 group of A37, together with TsaE and TsaB. TsaD likely plays a direct catalytic role in this reaction. This is tRNA N6-adenosine threonylcarbamoyltransferase from Streptococcus sanguinis (strain SK36).